Reading from the N-terminus, the 921-residue chain is Isoleucine--tRNA ligase (921 aa).

The 'HIGH' region motif lies at 57-67; sequence PYANGDIHMGH. Residue glutamate 552 coordinates L-isoleucyl-5'-AMP. Positions 593-597 match the 'KMSKS' region motif; that stretch reads KMSKS. An ATP-binding site is contributed by lysine 596. Zn(2+) contacts are provided by cysteine 888, cysteine 891, cysteine 908, and cysteine 911.

It belongs to the class-I aminoacyl-tRNA synthetase family. IleS type 1 subfamily. Monomer. The cofactor is Zn(2+).

It localises to the cytoplasm. It carries out the reaction tRNA(Ile) + L-isoleucine + ATP = L-isoleucyl-tRNA(Ile) + AMP + diphosphate. Its function is as follows. Catalyzes the attachment of isoleucine to tRNA(Ile). As IleRS can inadvertently accommodate and process structurally similar amino acids such as valine, to avoid such errors it has two additional distinct tRNA(Ile)-dependent editing activities. One activity is designated as 'pretransfer' editing and involves the hydrolysis of activated Val-AMP. The other activity is designated 'posttransfer' editing and involves deacylation of mischarged Val-tRNA(Ile). This is Isoleucine--tRNA ligase from Bacillus cytotoxicus (strain DSM 22905 / CIP 110041 / 391-98 / NVH 391-98).